The following is a 720-amino-acid chain: Hexanoyl-CoA synthase (720 aa).

The helical transmembrane segment at 242-262 (VDAVVIYLAIVLAGYVVVSIA) threads the bilayer. 290 to 293 (RGKK) lines the CoA pocket. ATP contacts are provided by residues 477–479 (GEA), 499–504 (EMCGGT), Glu585, and Arg607. Gly615 is a binding site for CoA. Lys618 contacts ATP. Gln681 is a binding site for CoA.

The protein belongs to the ATP-dependent AMP-binding enzyme family. It depends on Mg(2+) as a cofactor. In terms of tissue distribution, accumulates in glandular trichomes, especially in female flowers. Present at low levels in roots, stems and leaves.

Its subcellular location is the cytoplasm. It is found in the cytosol. The protein localises to the membrane. It catalyses the reaction hexanoate + ATP + CoA = hexanoyl-CoA + AMP + diphosphate. Its pathway is secondary metabolite biosynthesis; terpenoid biosynthesis. Inhibitied by high CoA concentrations. In terms of biological role, involved in the biosynthesis of cannabinoids-related terpenophenolic natural products, which have pharmacological activity. Acyl-activating enzyme that catalyzes the conversion of hexanoic acid to hexanoyl-CoA, precursor of the cannabinoid pathway. Can also activate other fatty acids including heptanoate, octanoate and nonanoate. In Cannabis sativa (Hemp), this protein is Hexanoyl-CoA synthase.